A 589-amino-acid chain; its full sequence is Leucine-rich repeat and immunoglobulin-like domain-containing nogo receptor-interacting protein 3 (589 aa).

The signal sequence occupies residues 1–23 (MTCWLHMLGLHLLLLPTAPLAAG). The 30-residue stretch at 24–53 (CPARCECSASTRTVACGRRRLTAIPEGIPA) folds into the LRRNT domain. Over 24 to 528 (CPARCECSAS…LDLTTILVST (505 aa)) the chain is Extracellular. LRR repeat units follow at residues 54-75 (ETRMLELSRNRIRCLNPGDLAS), 78-99 (TLEELDLNHNVIAHVEPGAFAN), 102-123 (RLRVLRLRGNQLKLIPPGVFTH), 126-147 (SLTLLDLSENKLVILLDFSFQD), 150-171 (SLQRLEVGDNDLVFISRRAFAG), 174-195 (GLAELTLERCNLTSLSPESLGH), 206-227 (HLAIAALEDQNFQKLPGLSHLE), 246-267 (NLTSLSITHTNITAVPAAALRQ), 270-291 (HLTCLNLSHNPISMVPRGSFRD), 294-315 (RLRELHLAGALLAVIEPQAFVG), and 318-339 (QIRLLNLSDNLLSTLEENTFHS). The N-linked (GlcNAc...) asparagine glycan is linked to Asn-184. 3 N-linked (GlcNAc...) asparagine glycosylation sites follow: Asn-246, Asn-256, and Asn-275. An N-linked (GlcNAc...) asparagine glycan is attached at Asn-323. Positions 351-405 (NPLACDCRLLWIVQRRKTLNFDGRLPACATPAEVRGDALHNLPDSVLFEYFVCRK) constitute an LRRCT domain. An Ig-like C2-type domain is found at 406–495 (PKIRERRLQH…GNDTYFATLT (90 aa)). The cysteines at positions 428 and 479 are disulfide-linked. N-linked (GlcNAc...) asparagine glycans are attached at residues Asn-487, Asn-501, and Asn-509. A helical membrane pass occupies residues 529–549 (AMGCITFLGVVLFCFLLLFVW). Residues 550–589 (SRGRGQHKNNFSVEYSFRKVDGPAAAAGQGGARKFNMKMI) lie on the Cytoplasmic side of the membrane.

Its subcellular location is the membrane. The protein is Leucine-rich repeat and immunoglobulin-like domain-containing nogo receptor-interacting protein 3 (Lingo3) of Mus musculus (Mouse).